Reading from the N-terminus, the 501-residue chain is Ribose import ATP-binding protein RbsA (501 aa).

2 consecutive ABC transporter domains span residues 5 to 241 and 252 to 495; these read LQLQ…VGRK and APGE…VGKQ. 37 to 44 serves as a coordination point for ATP; that stretch reads GENGAGKS.

The protein belongs to the ABC transporter superfamily. Ribose importer (TC 3.A.1.2.1) family. The complex is composed of an ATP-binding protein (RbsA), two transmembrane proteins (RbsC) and a solute-binding protein (RbsB).

It localises to the cell inner membrane. It catalyses the reaction D-ribose(out) + ATP + H2O = D-ribose(in) + ADP + phosphate + H(+). Its function is as follows. Part of the ABC transporter complex RbsABC involved in ribose import. Responsible for energy coupling to the transport system. The polypeptide is Ribose import ATP-binding protein RbsA (Pectobacterium atrosepticum (strain SCRI 1043 / ATCC BAA-672) (Erwinia carotovora subsp. atroseptica)).